The sequence spans 133 residues: Large ribosomal subunit protein uL14 (133 aa).

It belongs to the universal ribosomal protein uL14 family. As to quaternary structure, part of the 50S ribosomal subunit. Forms a cluster with proteins L3 and L24e, part of which may contact the 16S rRNA in 2 intersubunit bridges.

Binds to 23S rRNA. Forms part of two intersubunit bridges in the 70S ribosome. The protein is Large ribosomal subunit protein uL14 of Nanoarchaeum equitans (strain Kin4-M).